A 247-amino-acid polypeptide reads, in one-letter code: MYKLVLIRHGESTWNLDNRFTGWTDVDLTPLGIEQAKNAGRLLKAEGYEFDVAYTSVLKRATRTLWHVLDEMDRTWLPVVNSWRLNERHYGALQGLNKAETAKQYGDAQVLAWRRSYDTPPPALEPTDPRSERADRRYARLSQDQVPLTECLKDTVARVMPFWYEALAPAIKAGKRVVVAAHGNSIRALVKYLDNISDDDIVGLNIPNGIPLVYELDENLKPIRHYYLGDAEAAAKAAAAVASQGKA.

Substrate contacts are provided by residues 8–15, 21–22, arginine 60, 87–90, lysine 98, 114–115, and 183–184; these read RHGESTWN, TG, ERHY, RR, and GN. Histidine 9 serves as the catalytic Tele-phosphohistidine intermediate. Residue glutamate 87 is the Proton donor/acceptor of the active site.

Belongs to the phosphoglycerate mutase family. BPG-dependent PGAM subfamily. As to quaternary structure, homodimer.

The catalysed reaction is (2R)-2-phosphoglycerate = (2R)-3-phosphoglycerate. It participates in carbohydrate degradation; glycolysis; pyruvate from D-glyceraldehyde 3-phosphate: step 3/5. In terms of biological role, catalyzes the interconversion of 2-phosphoglycerate and 3-phosphoglycerate. The protein is 2,3-bisphosphoglycerate-dependent phosphoglycerate mutase of Albidiferax ferrireducens (strain ATCC BAA-621 / DSM 15236 / T118) (Rhodoferax ferrireducens).